Consider the following 155-residue polypeptide: S-ribosylhomocysteine lyase (155 aa).

Positions 58, 62, and 125 each coordinate Fe cation.

It belongs to the LuxS family. As to quaternary structure, homodimer. It depends on Fe cation as a cofactor.

It catalyses the reaction S-(5-deoxy-D-ribos-5-yl)-L-homocysteine = (S)-4,5-dihydroxypentane-2,3-dione + L-homocysteine. Its function is as follows. Involved in the synthesis of autoinducer 2 (AI-2) which is secreted by bacteria and is used to communicate both the cell density and the metabolic potential of the environment. The regulation of gene expression in response to changes in cell density is called quorum sensing. Catalyzes the transformation of S-ribosylhomocysteine (RHC) to homocysteine (HC) and 4,5-dihydroxy-2,3-pentadione (DPD). This chain is S-ribosylhomocysteine lyase, found in Chromohalobacter salexigens (strain ATCC BAA-138 / DSM 3043 / CIP 106854 / NCIMB 13768 / 1H11).